The primary structure comprises 596 residues: Dihydroxy-acid dehydratase pbrD, mitochondrial (596 aa).

Residues 1-18 (MATSSIRSRALGLSRRAR) constitute a mitochondrion transit peptide. Residue cysteine 84 participates in [2Fe-2S] cluster binding. Aspartate 116 is a Mg(2+) binding site. Cysteine 157 is a [2Fe-2S] cluster binding site. Residue aspartate 158 participates in Mg(2+) binding. Cysteine 230 is a binding site for [2Fe-2S] cluster. Glutamate 483 provides a ligand contact to Mg(2+). Residue serine 509 is the Proton acceptor of the active site.

Belongs to the IlvD/Edd family. The cofactor is [2Fe-2S] cluster. Mg(2+) is required as a cofactor.

It is found in the mitochondrion. The enzyme catalyses (2R)-2,3-dihydroxy-3-methylbutanoate = 3-methyl-2-oxobutanoate + H2O. The catalysed reaction is (2R,3R)-2,3-dihydroxy-3-methylpentanoate = (S)-3-methyl-2-oxopentanoate + H2O. Its pathway is amino-acid biosynthesis; L-isoleucine biosynthesis; L-isoleucine from 2-oxobutanoate: step 3/4. It functions in the pathway amino-acid biosynthesis; L-valine biosynthesis; L-valine from pyruvate: step 3/4. Its activity is regulated as follows. DHAD activity is not inhibited by the dihydroxyacid dehydratase inhibitor aspterric acid (AA). Its function is as follows. Dihydroxyacid dehydratase; part of the gene cluster that mediates the biosynthesis of the sesquiterpenoid aspterric acid (AA), an inhibitor of dihydroxy-acid dehydratase (DHAD) effective as an herbicide. Performs the third step in the common pathway leading to biosynthesis of branched-chain amino acids. Catalyzes the dehydration of (2R,3R)-2,3-dihydroxy-3-methylpentanoate (2,3-dihydroxy-3-methylvalerate) into 2-oxo-3-methylpentanoate (2-oxo-3-methylvalerate) and of (2R)-2,3-dihydroxy-3-methylbutanoate (2,3-dihydroxyisovalerate) into 2-oxo-3-methylbutanoate (2-oxoisovalerate), the penultimate precursor to L-isoleucine and L-valine, respectively. PbrD confers self-resistance in the presence of the dihydroxyacid dehydratase inhibitor aspterric acid (AA) produced by the ast cluster. This is Dihydroxy-acid dehydratase pbrD, mitochondrial from Penicillium brasilianum.